The following is a 152-amino-acid chain: Outer membrane protein assembly factor BamE (152 aa).

The signal sequence occupies residues 1–32 (MIDQNHDSEEQAQMQKLTRTVTLTVALTLVSG). Cys33 is lipidated: N-palmitoyl cysteine. Cys33 carries S-diacylglycerol cysteine lipidation. Residues 114 to 152 (IDRHGDFSRPPSVADERGIGPTDSTNARGNLLNARPDDE) are disordered.

Belongs to the BamE family. As to quaternary structure, part of the Bam complex.

Its subcellular location is the cell outer membrane. Functionally, part of the outer membrane protein assembly complex, which is involved in assembly and insertion of beta-barrel proteins into the outer membrane. This chain is Outer membrane protein assembly factor BamE, found in Halomonas elongata (strain ATCC 33173 / DSM 2581 / NBRC 15536 / NCIMB 2198 / 1H9).